We begin with the raw amino-acid sequence, 140 residues long: Large ribosomal subunit protein uL16 (140 aa).

The segment covering 1 to 14 (MLSPRRTKFRKQQR) has biased composition (basic residues). The segment at 1-22 (MLSPRRTKFRKQQRGRMEGAAT) is disordered.

The protein belongs to the universal ribosomal protein uL16 family. Part of the 50S ribosomal subunit.

In terms of biological role, binds 23S rRNA and is also seen to make contacts with the A and possibly P site tRNAs. This Cyanothece sp. (strain PCC 7425 / ATCC 29141) protein is Large ribosomal subunit protein uL16.